The following is a 919-amino-acid chain: Valine--tRNA ligase (919 aa).

Positions 46-56 (PNVTGTLHMGH) match the 'HIGH' region motif. The 'KMSKS' region signature appears at 528-532 (KMSKS). Position 531 (Lys-531) interacts with ATP. Residues 849–919 (LAGLVDIEAE…KTLEKKEALG (71 aa)) adopt a coiled-coil conformation.

It belongs to the class-I aminoacyl-tRNA synthetase family. ValS type 1 subfamily. Monomer.

The protein localises to the cytoplasm. The catalysed reaction is tRNA(Val) + L-valine + ATP = L-valyl-tRNA(Val) + AMP + diphosphate. Catalyzes the attachment of valine to tRNA(Val). As ValRS can inadvertently accommodate and process structurally similar amino acids such as threonine, to avoid such errors, it has a 'posttransfer' editing activity that hydrolyzes mischarged Thr-tRNA(Val) in a tRNA-dependent manner. In Francisella tularensis subsp. tularensis (strain SCHU S4 / Schu 4), this protein is Valine--tRNA ligase.